We begin with the raw amino-acid sequence, 285 residues long: uncharacterized protein (285 aa).

Mn(2+) contacts are provided by H110, D131, H133, D135, D214, and D216.

It belongs to the arginase family. Mn(2+) serves as cofactor.

This is an uncharacterized protein from Methanothermus fervidus.